The following is a 524-amino-acid chain: MKKFDKLGLDNIKEIFHNLSYDELNAHEKANNEGLSTDNDTFCVDTGIFTGRSPKDKYFVKQDPSSKYIAWGKVNQPITKELFDKLLTKAKQELSGKKIYVQDVFCGASLQSRKAVRFVTEIAWQAHFVKNMFIRPSQEELENFKADFIVYNACKCINEDYKQDGLNSEVFVIFNVEENIAVIGGTWYGGEMKKGIFSMMNYWLPLENKLSMHCSANVGEKDDVALFFGLSGTGKTTLSTDPKRRLIGDDEHGWDDEGVFNFEGGCYAKTINLDPEHEPEIYGAIKRNALLENVVLRADKSVDYADASKTENTRVSYPIEHIENHEPSLKAGHPKNIIFLSADAFGILPPVSKLSKEQAMYYFLSGYTAKVAGTERGITEPQATFSACFGEPFMPLHPTVYARLLGEKIEKHEVNVYLVNTGWSGGSYGVGKRMSIKATRACINAILDGSITKCEFENFEVFDLAIPKALEGVESVLLNPINTWLDKNAYIATRDKLAHMFIQNFKRYEDVKEGIEFSKFGPKI.

Residues Arg-52, Tyr-188, and Lys-194 each contribute to the substrate site. ATP contacts are provided by residues Lys-194, His-213, and Gly-229–Thr-237. Residues Lys-194 and His-213 each contribute to the Mn(2+) site. Asp-250 is a binding site for Mn(2+). ATP contacts are provided by Glu-278, Arg-314, and Thr-439. Residue Arg-314 coordinates substrate.

The protein belongs to the phosphoenolpyruvate carboxykinase (ATP) family. Requires Mn(2+) as cofactor.

Its subcellular location is the cytoplasm. The enzyme catalyses oxaloacetate + ATP = phosphoenolpyruvate + ADP + CO2. The protein operates within carbohydrate biosynthesis; gluconeogenesis. Functionally, involved in the gluconeogenesis. Catalyzes the conversion of oxaloacetate (OAA) to phosphoenolpyruvate (PEP) through direct phosphoryl transfer between the nucleoside triphosphate and OAA. This is Phosphoenolpyruvate carboxykinase (ATP) from Campylobacter jejuni subsp. jejuni serotype O:2 (strain ATCC 700819 / NCTC 11168).